The following is a 434-amino-acid chain: Purple acid phosphatase 22 (434 aa).

A signal peptide spans 1-22 (MKLFGLFLSFTLLFLCPFISQA). An N-linked (GlcNAc...) asparagine glycan is attached at Asn-116. 3 residues coordinate Fe cation: Asp-148, Asp-175, and Tyr-178. Zn(2+) is bound at residue Asp-175. Residues Asn-208 and His-292 each coordinate Zn(2+). Residue Asn-208 participates in substrate binding. His-302 (proton donor) is an active-site residue. His-329 is a binding site for Zn(2+). 329–331 (HVH) provides a ligand contact to substrate. His-331 contacts Fe cation. Asn-403 carries an N-linked (GlcNAc...) asparagine glycan.

Belongs to the metallophosphoesterase superfamily. Purple acid phosphatase family. In terms of assembly, homodimer. It depends on Fe cation as a cofactor. Requires Zn(2+) as cofactor. In terms of tissue distribution, expressed in roots, stems, leaves, flowers and siliques.

Its subcellular location is the secreted. It catalyses the reaction a phosphate monoester + H2O = an alcohol + phosphate. This Arabidopsis thaliana (Mouse-ear cress) protein is Purple acid phosphatase 22 (PAP22).